The following is a 405-amino-acid chain: Nicotinate phosphoribosyltransferase (405 aa).

His230 bears the Phosphohistidine; by autocatalysis mark.

The protein belongs to the NAPRTase family. In terms of processing, transiently phosphorylated on a His residue during the reaction cycle. Phosphorylation strongly increases the affinity for substrates and increases the rate of nicotinate D-ribonucleotide production. Dephosphorylation regenerates the low-affinity form of the enzyme, leading to product release.

It catalyses the reaction nicotinate + 5-phospho-alpha-D-ribose 1-diphosphate + ATP + H2O = nicotinate beta-D-ribonucleotide + ADP + phosphate + diphosphate. Its pathway is cofactor biosynthesis; NAD(+) biosynthesis; nicotinate D-ribonucleotide from nicotinate: step 1/1. Functionally, catalyzes the synthesis of beta-nicotinate D-ribonucleotide from nicotinate and 5-phospho-D-ribose 1-phosphate at the expense of ATP. The chain is Nicotinate phosphoribosyltransferase from Bordetella bronchiseptica (strain ATCC BAA-588 / NCTC 13252 / RB50) (Alcaligenes bronchisepticus).